Consider the following 546-residue polypeptide: Methionine--tRNA ligase (546 aa).

A 'HIGH' region motif is present at residues 15–25 (PYANGPIHLGH). 4 residues coordinate Zn(2+): Cys-146, Cys-149, Cys-159, and Cys-162. Residues 332-336 (KMSKS) carry the 'KMSKS' region motif. Lys-335 is an ATP binding site.

The protein belongs to the class-I aminoacyl-tRNA synthetase family. MetG type 1 subfamily. As to quaternary structure, monomer. It depends on Zn(2+) as a cofactor.

The protein resides in the cytoplasm. It carries out the reaction tRNA(Met) + L-methionine + ATP = L-methionyl-tRNA(Met) + AMP + diphosphate. Its function is as follows. Is required not only for elongation of protein synthesis but also for the initiation of all mRNA translation through initiator tRNA(fMet) aminoacylation. This chain is Methionine--tRNA ligase, found in Coxiella burnetii (strain Dugway 5J108-111).